The primary structure comprises 353 residues: Uroporphyrinogen decarboxylase (353 aa).

Residues 26 to 30 (RQAGR), Asp75, Tyr161, Ser216, and His332 contribute to the substrate site.

Belongs to the uroporphyrinogen decarboxylase family. In terms of assembly, homodimer.

It localises to the cytoplasm. It catalyses the reaction uroporphyrinogen III + 4 H(+) = coproporphyrinogen III + 4 CO2. It functions in the pathway porphyrin-containing compound metabolism; protoporphyrin-IX biosynthesis; coproporphyrinogen-III from 5-aminolevulinate: step 4/4. In terms of biological role, catalyzes the decarboxylation of four acetate groups of uroporphyrinogen-III to yield coproporphyrinogen-III. In Gluconacetobacter diazotrophicus (strain ATCC 49037 / DSM 5601 / CCUG 37298 / CIP 103539 / LMG 7603 / PAl5), this protein is Uroporphyrinogen decarboxylase.